A 170-amino-acid polypeptide reads, in one-letter code: Peptide deformylase (170 aa).

Residues cysteine 91 and histidine 133 each coordinate Fe cation. Glutamate 134 is a catalytic residue. Histidine 137 contacts Fe cation.

This sequence belongs to the polypeptide deformylase family. Requires Fe(2+) as cofactor.

It carries out the reaction N-terminal N-formyl-L-methionyl-[peptide] + H2O = N-terminal L-methionyl-[peptide] + formate. In terms of biological role, removes the formyl group from the N-terminal Met of newly synthesized proteins. Requires at least a dipeptide for an efficient rate of reaction. N-terminal L-methionine is a prerequisite for activity but the enzyme has broad specificity at other positions. In Histophilus somni (strain 2336) (Haemophilus somnus), this protein is Peptide deformylase.